A 242-amino-acid polypeptide reads, in one-letter code: DNA repair protein RecO (242 aa).

The protein belongs to the RecO family.

Involved in DNA repair and RecF pathway recombination. The chain is DNA repair protein RecO from Paracoccus denitrificans (strain Pd 1222).